We begin with the raw amino-acid sequence, 173 residues long: Putative pre-16S rRNA nuclease (173 aa).

It belongs to the YqgF nuclease family.

It localises to the cytoplasm. Its function is as follows. Could be a nuclease involved in processing of the 5'-end of pre-16S rRNA. The sequence is that of Putative pre-16S rRNA nuclease from Psychrobacter cryohalolentis (strain ATCC BAA-1226 / DSM 17306 / VKM B-2378 / K5).